The following is a 162-amino-acid chain: Circumsporozoite protein-related antigen (162 aa).

Positions 1–16 (MKILSVFFLALFFIIF) are cleaved as a signal peptide. Disordered stretches follow at residues 24–44 (KTNK…KGSG) and 109–162 (PFKI…GPEH). The segment covering 114–130 (SSDPADNANPDADSESN) has biased composition (low complexity). Polar residues predominate over residues 137–162 (PQVTAQDVTPEQPQGDDNNLVSGPEH).

The chain is Circumsporozoite protein-related antigen from Plasmodium falciparum.